The sequence spans 119 residues: Integration host factor subunit alpha (119 aa).

A disordered region spans residues 96–119 (INGQQGSGKMNGEASHEQLSAEPE).

It belongs to the bacterial histone-like protein family. In terms of assembly, heterodimer of an alpha and a beta chain.

Its function is as follows. This protein is one of the two subunits of integration host factor, a specific DNA-binding protein that functions in genetic recombination as well as in transcriptional and translational control. The sequence is that of Integration host factor subunit alpha from Bradyrhizobium sp. (strain BTAi1 / ATCC BAA-1182).